The primary structure comprises 393 residues: Arrestin-C (393 aa).

The segment covering 371 to 386 has biased composition (basic and acidic residues); sequence FARQEDGGEEKQKALA. The tract at residues 371 to 393 is disordered; the sequence is FARQEDGGEEKQKALAEEGDEGS.

Belongs to the arrestin family. Homodimer; disulfide-linked in response to retinal illumination. Interacts with CXCR4; the interaction is dependent on the C-terminal phosphorylation of CXCR4 and modulates the calcium ion mobilization activity of CXCR4.

It localises to the photoreceptor inner segment. It is found in the cell projection. The protein resides in the cilium. The protein localises to the photoreceptor outer segment. Its function is as follows. May play a role in an as yet undefined retina-specific signal transduction. Could bind to photoactivated-phosphorylated red/green opsins. The sequence is that of Arrestin-C (ARR3) from Ictidomys tridecemlineatus (Thirteen-lined ground squirrel).